A 206-amino-acid polypeptide reads, in one-letter code: Sclerostin domain-containing protein 1 (206 aa).

The signal sequence occupies residues 1 to 22; it reads MLLSAIHFYGLLLACTFTRSYS. Residues 40-68 are disordered; it reads APASPSSNSTLNQARNGGRHYAGTGSDRN. Over residues 43–54 the composition is skewed to polar residues; sequence SPSSNSTLNQAR. Asn-47 carries an N-linked (GlcNAc...) asparagine glycan. 4 disulfides stabilise this stretch: Cys-75-Cys-133, Cys-89-Cys-147, Cys-100-Cys-163, and Cys-104-Cys-165. The CTCK domain occupies 75 to 170; sequence CRELRSTKYI…TACKCKRYTR (96 aa). Asn-173 carries an N-linked (GlcNAc...) asparagine glycan. Residues 176 to 206 form a disordered region; sequence SHNFEGTSQAKPVQHHKERKRASKSSKHSTS. Basic residues predominate over residues 188-206; the sequence is VQHHKERKRASKSSKHSTS.

Belongs to the sclerostin family. As to quaternary structure, interacts with LRP6.

The protein resides in the secreted. Its function is as follows. Can activate or inhibit Wnt signaling in a context-dependent manner. Activates the canonical Wnt pathway whereby acts through Disheveled proteins and beta-catenin. Antagonises Wnt signaling through the canonical pathways presumably by blocking accessibility of certain WNTs to their receptors. Induces posterior neural markers via components of the canonical Wnt pathway. In Gallus gallus (Chicken), this protein is Sclerostin domain-containing protein 1 (SOSTDC1).